Here is a 31-residue protein sequence, read N- to C-terminus: Cytochrome b6-f complex subunit 6 (31 aa).

A helical membrane pass occupies residues 4–24 (LTSYFGFLLAALTITFVLFIG).

This sequence belongs to the PetL family. As to quaternary structure, the 4 large subunits of the cytochrome b6-f complex are cytochrome b6, subunit IV (17 kDa polypeptide, PetD), cytochrome f and the Rieske protein, while the 4 small subunits are PetG, PetL, PetM and PetN. The complex functions as a dimer.

It is found in the plastid. Its subcellular location is the chloroplast thylakoid membrane. Component of the cytochrome b6-f complex, which mediates electron transfer between photosystem II (PSII) and photosystem I (PSI), cyclic electron flow around PSI, and state transitions. PetL is important for photoautotrophic growth as well as for electron transfer efficiency and stability of the cytochrome b6-f complex. The sequence is that of Cytochrome b6-f complex subunit 6 from Oxybasis rubra (Red goosefoot).